The primary structure comprises 244 residues: MSLTPLCEDLPQFLQNYLPNAGQTENTIVPFVTLTYAQSLDARVSRGPGVRTTISHPETKTMTHYLRHHHDGILVGSGTVLADNPGLNCKWGPDPAANSPRPIIIDTKQKWRFDGSKMQELFIKRQGKPPIVVVTSEPIIKEQHVDYAICPINDTTKLVDWKKLFEILKEEFNIRSVMVEGGANVINQLLLRSDIVNSLIITIGSTFLGSSGTEVSPPQTVNLKDMSWWKGITDVVLCARLADD.

Residues threonine 79, aspartate 83, valine 159, and 182–186 each bind NADP(+); that span reads GANVI.

This sequence belongs to the HTP reductase family. As to quaternary structure, homodimer.

The enzyme catalyses 2,5-diamino-6-(1-D-ribitylamino)pyrimidin-4(3H)-one 5'-phosphate + NADP(+) = 2,5-diamino-6-(1-D-ribosylamino)pyrimidin-4(3H)-one 5'-phosphate + NADPH + H(+). The catalysed reaction is 2,5-diamino-6-(1-D-ribitylamino)pyrimidin-4(3H)-one 5'-phosphate + NAD(+) = 2,5-diamino-6-(1-D-ribosylamino)pyrimidin-4(3H)-one 5'-phosphate + NADH + H(+). It participates in cofactor biosynthesis; riboflavin biosynthesis. Catalyzes an early step in riboflavin biosynthesis, the NADPH-dependent reduction of the ribose side chain of 2,5-diamino-6-ribosylamino-4(3H)-pyrimidinone 5'-phosphate, yielding 2,5-diamino-6-ribitylamino-4(3H)-pyrimidinone 5'-phosphate. The chain is 2,5-diamino-6-ribosylamino-4(3H)-pyrimidinone 5'-phosphate reductase (RIB7) from Saccharomyces cerevisiae (strain ATCC 204508 / S288c) (Baker's yeast).